We begin with the raw amino-acid sequence, 128 residues long: Ribonuclease P protein component (128 aa).

The protein belongs to the RnpA family. Consists of a catalytic RNA component (M1 or rnpB) and a protein subunit.

It catalyses the reaction Endonucleolytic cleavage of RNA, removing 5'-extranucleotides from tRNA precursor.. RNaseP catalyzes the removal of the 5'-leader sequence from pre-tRNA to produce the mature 5'-terminus. It can also cleave other RNA substrates such as 4.5S RNA. The protein component plays an auxiliary but essential role in vivo by binding to the 5'-leader sequence and broadening the substrate specificity of the ribozyme. The protein is Ribonuclease P protein component of Mycoplasma genitalium (strain ATCC 33530 / DSM 19775 / NCTC 10195 / G37) (Mycoplasmoides genitalium).